The primary structure comprises 296 residues: Phosphoribosylaminoimidazole-succinocarboxamide synthase (296 aa).

This sequence belongs to the SAICAR synthetase family.

It catalyses the reaction 5-amino-1-(5-phospho-D-ribosyl)imidazole-4-carboxylate + L-aspartate + ATP = (2S)-2-[5-amino-1-(5-phospho-beta-D-ribosyl)imidazole-4-carboxamido]succinate + ADP + phosphate + 2 H(+). Its pathway is purine metabolism; IMP biosynthesis via de novo pathway; 5-amino-1-(5-phospho-D-ribosyl)imidazole-4-carboxamide from 5-amino-1-(5-phospho-D-ribosyl)imidazole-4-carboxylate: step 1/2. The chain is Phosphoribosylaminoimidazole-succinocarboxamide synthase from Geobacter sp. (strain M21).